The chain runs to 48 residues: Photosystem II reaction center protein K (48 aa).

Positions 1–11 (MFPSTNQEVLA) are excised as a propeptide. The helical transmembrane segment at 23-43 (IVDVLPIIPLLFLLLAFVWQA) threads the bilayer.

The protein belongs to the PsbK family. PSII is composed of 1 copy each of membrane proteins PsbA, PsbB, PsbC, PsbD, PsbE, PsbF, PsbH, PsbI, PsbJ, PsbK, PsbL, PsbM, PsbT, PsbY, PsbZ, Psb30/Ycf12, at least 3 peripheral proteins of the oxygen-evolving complex and a large number of cofactors. It forms dimeric complexes.

It is found in the plastid. It localises to the chloroplast thylakoid membrane. Its function is as follows. One of the components of the core complex of photosystem II (PSII). PSII is a light-driven water:plastoquinone oxidoreductase that uses light energy to abstract electrons from H(2)O, generating O(2) and a proton gradient subsequently used for ATP formation. It consists of a core antenna complex that captures photons, and an electron transfer chain that converts photonic excitation into a charge separation. This chain is Photosystem II reaction center protein K, found in Euglena sanguinea.